Reading from the N-terminus, the 119-residue chain is Protein MRP-126 (119 aa).

2 consecutive EF-hand domains span residues 23-58 (DVFH…LKHV) and 59-94 (KNQV…VTVA). Positions 37, 42, 72, 74, 76, 78, and 83 each coordinate Ca(2+).

This sequence belongs to the S-100 family. Expressed in v-myb-transformed myelomonocytic cells.

In Gallus gallus (Chicken), this protein is Protein MRP-126.